Reading from the N-terminus, the 270-residue chain is Small ribosomal subunit protein eS1 (270 aa).

2 disordered regions span residues 1–20 (MAVG…SKKK) and 238–270 (GGGK…QESV).

This sequence belongs to the eukaryotic ribosomal protein eS1 family. As to quaternary structure, component of the small ribosomal subunit. Mature ribosomes consist of a small (40S) and a large (60S) subunit. The 40S subunit contains about 33 different proteins and 1 molecule of RNA (18S). The 60S subunit contains about 49 different proteins and 3 molecules of RNA (28S, 5.8S and 5S).

It is found in the cytoplasm. The protein is Small ribosomal subunit protein eS1 of Culex quinquefasciatus (Southern house mosquito).